A 589-amino-acid chain; its full sequence is Transmembrane 9 superfamily member 3 (589 aa).

Positions 1 to 28 (MRPLPGALGVAAAAALWLLLLLLPRTRA) are cleaved as a signal peptide. N-linked (GlcNAc...) asparagine glycosylation is present at N174. 5 consecutive transmembrane segments (helical) span residues 224-244 (FSIF…SMIL), 294-314 (LIGS…VAMI), 328-348 (AIFV…SLYA), 360-380 (FIGA…INFI), and 389-409 (AIPF…ILPL). A glycan (N-linked (GlcNAc...) asparagine) is linked at N419. The next 4 membrane-spanning stretches (helical) occupy residues 449-469 (IVCL…YFIF), 482-502 (GFMM…TIVC), 519-539 (FLSA…YYFF), and 551-571 (FYFG…GAIG).

This sequence belongs to the nonaspanin (TM9SF) (TC 9.A.2) family.

Its subcellular location is the membrane. In Homo sapiens (Human), this protein is Transmembrane 9 superfamily member 3 (TM9SF3).